The chain runs to 532 residues: Nectin-4 (532 aa).

A signal peptide spans 1–30 (MGPLHGALLPPISVTVSLLILLLCAPGGRC). The Ig-like V-type domain occupies 31–142 (GVVHTEKSMT…GNFDAELELK (112 aa)). Topologically, residues 31 to 344 (GVVHTEKSMT…TKIDLVSVSL (314 aa)) are extracellular. Intrachain disulfides connect C51-C125, C169-C221, and C266-C312. Ig-like C2-type domains are found at residues 146-235 (PPLP…KRIT) and 244-328 (AEVS…AIVS). The interval 152–179 (GPGPPLTEGEGKSLAASCTAEGNPAPTL) is disordered. N-linked (GlcNAc...) asparagine glycosylation is found at N189 and N282. The helical transmembrane segment at 345-365 (GSVGILTAVLLVVLVITLLLV) threads the bilayer. The Cytoplasmic segment spans residues 366–532 (NRHHKRQTKQ…IYINGRGHLV (167 aa)). The tract at residues 453–491 (QTELLSTVPDEEVKEDGEEPEQVEQSLEKEPNPTEPDGM) is disordered. Over residues 461 to 474 (PDEEVKEDGEEPEQ) the composition is skewed to acidic residues.

It belongs to the nectin family.

The protein resides in the cell membrane. In terms of biological role, may be involved in cell adhesion. This chain is Nectin-4, found in Xenopus tropicalis (Western clawed frog).